Consider the following 147-residue polypeptide: Large ribosomal subunit protein bL9 (147 aa).

This sequence belongs to the bacterial ribosomal protein bL9 family.

Its function is as follows. Binds to the 23S rRNA. The sequence is that of Large ribosomal subunit protein bL9 from Halalkalibacterium halodurans (strain ATCC BAA-125 / DSM 18197 / FERM 7344 / JCM 9153 / C-125) (Bacillus halodurans).